The sequence spans 156 residues: Small ribosomal subunit protein uS7 (156 aa).

The protein belongs to the universal ribosomal protein uS7 family. In terms of assembly, part of the 30S ribosomal subunit. Contacts proteins S9 and S11.

One of the primary rRNA binding proteins, it binds directly to 16S rRNA where it nucleates assembly of the head domain of the 30S subunit. Is located at the subunit interface close to the decoding center, probably blocks exit of the E-site tRNA. The protein is Small ribosomal subunit protein uS7 of Streptomyces avermitilis (strain ATCC 31267 / DSM 46492 / JCM 5070 / NBRC 14893 / NCIMB 12804 / NRRL 8165 / MA-4680).